We begin with the raw amino-acid sequence, 144 residues long: 3-dehydroquinate dehydratase (144 aa).

Y22 functions as the Proton acceptor in the catalytic mechanism. Substrate-binding residues include N73, H79, and D86. The Proton donor role is filled by H99. Residues 100 to 101 (LS) and R110 contribute to the substrate site.

Belongs to the type-II 3-dehydroquinase family. In terms of assembly, homododecamer.

It catalyses the reaction 3-dehydroquinate = 3-dehydroshikimate + H2O. It participates in metabolic intermediate biosynthesis; chorismate biosynthesis; chorismate from D-erythrose 4-phosphate and phosphoenolpyruvate: step 3/7. In terms of biological role, catalyzes a trans-dehydration via an enolate intermediate. This Geotalea daltonii (strain DSM 22248 / JCM 15807 / FRC-32) (Geobacter daltonii) protein is 3-dehydroquinate dehydratase.